We begin with the raw amino-acid sequence, 283 residues long: Large ribosomal subunit protein uL4 (283 aa).

It belongs to the universal ribosomal protein uL4 family. In terms of assembly, part of the 50S ribosomal subunit.

In terms of biological role, one of the primary rRNA binding proteins, this protein initially binds near the 5'-end of the 23S rRNA. It is important during the early stages of 50S assembly. It makes multiple contacts with different domains of the 23S rRNA in the assembled 50S subunit and ribosome. Its function is as follows. Forms part of the polypeptide exit tunnel. The polypeptide is Large ribosomal subunit protein uL4 (Pyrobaculum aerophilum (strain ATCC 51768 / DSM 7523 / JCM 9630 / CIP 104966 / NBRC 100827 / IM2)).